The following is a 513-amino-acid chain: ATP synthase subunit alpha (513 aa).

Residue 169-176 (GDRQIGKT) participates in ATP binding.

It belongs to the ATPase alpha/beta chains family. In terms of assembly, F-type ATPases have 2 components, CF(1) - the catalytic core - and CF(0) - the membrane proton channel. CF(1) has five subunits: alpha(3), beta(3), gamma(1), delta(1), epsilon(1). CF(0) has three main subunits: a(1), b(2) and c(9-12). The alpha and beta chains form an alternating ring which encloses part of the gamma chain. CF(1) is attached to CF(0) by a central stalk formed by the gamma and epsilon chains, while a peripheral stalk is formed by the delta and b chains.

It localises to the cell inner membrane. The enzyme catalyses ATP + H2O + 4 H(+)(in) = ADP + phosphate + 5 H(+)(out). Produces ATP from ADP in the presence of a proton gradient across the membrane. The alpha chain is a regulatory subunit. The chain is ATP synthase subunit alpha from Francisella tularensis subsp. tularensis (strain WY96-3418).